A 444-amino-acid polypeptide reads, in one-letter code: Methylenetetrahydrofolate--tRNA-(uracil-5-)-methyltransferase TrmFO (444 aa).

10–15 serves as a coordination point for FAD; that stretch reads GAGLAG.

It belongs to the MnmG family. TrmFO subfamily. It depends on FAD as a cofactor.

It localises to the cytoplasm. The catalysed reaction is uridine(54) in tRNA + (6R)-5,10-methylene-5,6,7,8-tetrahydrofolate + NADH + H(+) = 5-methyluridine(54) in tRNA + (6S)-5,6,7,8-tetrahydrofolate + NAD(+). It carries out the reaction uridine(54) in tRNA + (6R)-5,10-methylene-5,6,7,8-tetrahydrofolate + NADPH + H(+) = 5-methyluridine(54) in tRNA + (6S)-5,6,7,8-tetrahydrofolate + NADP(+). In terms of biological role, catalyzes the folate-dependent formation of 5-methyl-uridine at position 54 (M-5-U54) in all tRNAs. This is Methylenetetrahydrofolate--tRNA-(uracil-5-)-methyltransferase TrmFO from Streptococcus equi subsp. equi (strain 4047).